The chain runs to 297 residues: uncharacterized protein (297 aa).

Disordered regions lie at residues 12-43, 65-85, 122-151, and 265-297; these read QNNN…TNDN, VPNS…DKPI, KVST…TNET, and SRLS…DQNN. Residues 65-79 show a composition bias toward polar residues; it reads VPNSINVNTSSSGNK. Positions 122–135 are enriched in low complexity; that stretch reads KVSTTTTTTSSTSK. Residues 140–151 are compositionally biased toward polar residues; the sequence is QTITKPNKTNET. Residues 268-287 show a composition bias toward low complexity; that stretch reads SSNNNNNNNNNNNNNNNNSN.

This is an uncharacterized protein from Dictyostelium discoideum (Social amoeba).